A 513-amino-acid polypeptide reads, in one-letter code: Bifunctional purine biosynthesis protein PurH (513 aa).

An MGS-like domain is found at 1–145 (MTKRALISVS…KNYQDVTAVV (145 aa)).

It belongs to the PurH family.

The enzyme catalyses (6R)-10-formyltetrahydrofolate + 5-amino-1-(5-phospho-beta-D-ribosyl)imidazole-4-carboxamide = 5-formamido-1-(5-phospho-D-ribosyl)imidazole-4-carboxamide + (6S)-5,6,7,8-tetrahydrofolate. The catalysed reaction is IMP + H2O = 5-formamido-1-(5-phospho-D-ribosyl)imidazole-4-carboxamide. The protein operates within purine metabolism; IMP biosynthesis via de novo pathway; 5-formamido-1-(5-phospho-D-ribosyl)imidazole-4-carboxamide from 5-amino-1-(5-phospho-D-ribosyl)imidazole-4-carboxamide (10-formyl THF route): step 1/1. It functions in the pathway purine metabolism; IMP biosynthesis via de novo pathway; IMP from 5-formamido-1-(5-phospho-D-ribosyl)imidazole-4-carboxamide: step 1/1. This chain is Bifunctional purine biosynthesis protein PurH, found in Enterococcus faecalis (strain ATCC 700802 / V583).